A 178-amino-acid chain; its full sequence is Deoxycytidylate deaminase (178 aa).

Residues 14–145 (EWPEYFMAVA…EETTAARLLF (132 aa)) enclose the CMP/dCMP-type deaminase domain. His-84 serves as a coordination point for Zn(2+). The active-site Proton donor is Glu-86. Zn(2+)-binding residues include Cys-110 and Cys-113. At Ser-174 the chain carries Phosphoserine.

Belongs to the cytidine and deoxycytidylate deaminase family. Homohexamer. It depends on Zn(2+) as a cofactor.

It carries out the reaction dCMP + H2O + H(+) = dUMP + NH4(+). The catalysed reaction is 5-hydroxymethyl-dCMP + H2O + H(+) = 5-hydroxymethyl-dUMP + NH4(+). With respect to regulation, allosteric enzyme whose activity is greatly influenced by the end products of its metabolic pathway, dCTP and dTTP. In terms of biological role, catalyzes the deamination of dCMP to dUMP, providing the nucleoside monophosphate substrate for the thymidylate synthase/TYMS. Also, part of a nucleotide salvage pathway that eliminates epigenetically modified 5-hydroxymethyl-dCMP (hmdCMP) in a two-step process entailing deamination to cytotoxic 5-hydroxymethyl-dUMP (hmdUMP), followed by its hydrolysis into 5-hydroxymethyluracil (hmU) and 2-deoxy-D-ribose 5-phosphate (deoxyribosephosphate). Catalyzes the first step in that pathway, the deamination of 5-hydroxymethyl-dCMP (hmdCMP). The chain is Deoxycytidylate deaminase from Mus musculus (Mouse).